Consider the following 309-residue polypeptide: Porphobilinogen deaminase (309 aa).

Residue cysteine 243 is modified to S-(dipyrrolylmethanemethyl)cysteine.

The protein belongs to the HMBS family. In terms of assembly, monomer. Dipyrromethane is required as a cofactor.

It carries out the reaction 4 porphobilinogen + H2O = hydroxymethylbilane + 4 NH4(+). The protein operates within porphyrin-containing compound metabolism; protoporphyrin-IX biosynthesis; coproporphyrinogen-III from 5-aminolevulinate: step 2/4. Its function is as follows. Tetrapolymerization of the monopyrrole PBG into the hydroxymethylbilane pre-uroporphyrinogen in several discrete steps. This is Porphobilinogen deaminase from Deinococcus geothermalis (strain DSM 11300 / CIP 105573 / AG-3a).